The sequence spans 501 residues: Actin nucleation-promoting factor WASL (501 aa).

Residue Ser2 is modified to N-acetylserine. The region spanning 31–138 (LGKKCVTMSS…KAVTDLLGRR (108 aa)) is the WH1 domain. Disordered regions lie at residues 135–158 (LGRR…PMAT) and 180–202 (SHTK…DIGT). Positions 183-195 (KEKKKGKAKKKRL) are enriched in basic residues. Positions 200–213 (IGTPSNFQHIGHVG) constitute a CRIB domain. At Ser239 the chain carries Phosphoserine; by TNK2. Residue Tyr253 is modified to Phosphotyrosine; by FAK1 and TNK2. Disordered regions lie at residues 263-405 (EAVK…KAAL) and 442-501 (QLKS…EWED). Composition is skewed to pro residues over residues 273–361 (APPP…PPPL) and 368–387 (APPP…PPGL). Residue Arg304 is modified to Omega-N-methylarginine. 2 WH2 domains span residues 401–418 (NKAA…LKKV) and 429–446 (GRDA…LKSV). Positions 442–453 (QLKSVSDGQEST) are enriched in polar residues. Phosphoserine is present on residues Ser480 and Ser481. The segment covering 482 to 501 (DEDEDDDDEEDFQDDDEWED) has biased composition (acidic residues).

In terms of assembly, binds actin and the Arp2/3 complex. Interacts with CDC42. Interacts with FCHSD1. Interacts with FCHSD2. Binds to SH3 domains of GRB2. Interacts with the C-terminal SH3 domain of DNMBP. Interacts with SNX9. Interacts with the WW domains of PRPF40A/FBP11. Interacts with PTK2/FAK1. Interacts with PACSIN1, PACSIN2 and PACSIN3. Interacts with NOSTRIN. Binds to TNK2. Interacts with SNX33. Interacts with NONO (via second RRM domain); the interaction is direct. Component of a multiprotein complex with NONO and SFPQ; associates with the complex via direct interaction with NONO. In terms of processing, phosphorylation at Ser-239, Tyr-253, Ser-480 and Ser-481 enhances actin polymerization activity.

The protein localises to the cytoplasm. It localises to the cytoskeleton. Its subcellular location is the nucleus. Its function is as follows. Regulates actin polymerization by stimulating the actin-nucleating activity of the Arp2/3 complex. Involved in various processes, such as mitosis and cytokinesis, via its role in the regulation of actin polymerization. Together with CDC42, involved in the extension and maintenance of the formation of thin, actin-rich surface projections called filopodia. In addition to its role in the cytoplasm, also plays a role in the nucleus by regulating gene transcription, probably by promoting nuclear actin polymerization. Binds to HSF1/HSTF1 and forms a complex on heat shock promoter elements (HSE) that negatively regulates HSP90 expression. Plays a role in dendrite spine morphogenesis. This Rattus norvegicus (Rat) protein is Actin nucleation-promoting factor WASL (Wasl).